Reading from the N-terminus, the 191-residue chain is Ferric nitrobindin-like protein (191 aa).

The GXWXGXG signature appears at 20 to 26 (GNWAGAG).

Belongs to the nitrobindin family.

This is Ferric nitrobindin-like protein from Streptomyces avermitilis (strain ATCC 31267 / DSM 46492 / JCM 5070 / NBRC 14893 / NCIMB 12804 / NRRL 8165 / MA-4680).